The primary structure comprises 445 residues: Xylose isomerase (445 aa).

Catalysis depends on residues histidine 99 and aspartate 102. Mg(2+) contacts are provided by glutamate 230, glutamate 266, histidine 269, aspartate 294, aspartate 305, aspartate 307, and aspartate 337.

The protein belongs to the xylose isomerase family. In terms of assembly, homotetramer. Mg(2+) is required as a cofactor.

Its subcellular location is the cytoplasm. It carries out the reaction alpha-D-xylose = alpha-D-xylulofuranose. The polypeptide is Xylose isomerase (Geobacillus kaustophilus (strain HTA426)).